The chain runs to 272 residues: HMP-PP phosphatase (272 aa).

The active-site Nucleophile is the Asp8. Residues Asp8, Asp10, and Asp212 each contribute to the Mg(2+) site.

It belongs to the HAD-like hydrolase superfamily. Cof family. Mg(2+) is required as a cofactor.

It carries out the reaction 4-amino-2-methyl-5-(diphosphooxymethyl)pyrimidine + H2O = 4-amino-2-methyl-5-(phosphooxymethyl)pyrimidine + phosphate + H(+). Its function is as follows. Catalyzes the hydrolysis of 4-amino-2-methyl-5-hydroxymethylpyrimidine pyrophosphate (HMP-PP) to 4-amino-2-methyl-5-hydroxymethylpyrimidine phosphate (HMP-P). In Enterobacter sp. (strain 638), this protein is HMP-PP phosphatase.